A 34-amino-acid chain; its full sequence is MKTRPKKAGQQKKTESKAIDSLDKKLGGPNRPST.

Positions 1–10 (MKTRPKKAGQ) are enriched in basic residues. Residues 1-34 (MKTRPKKAGQQKKTESKAIDSLDKKLGGPNRPST) are disordered. Positions 12–26 (KKTESKAIDSLDKKL) are enriched in basic and acidic residues.

It is found in the spore core. This is Small, acid-soluble spore protein M (sspM) from Bacillus subtilis (strain 168).